The following is a 1501-amino-acid chain: MSDSKMSSQDESKLEKAISQDSSSENHSINEYHGFDAHTSENIQNLARTFTHDSFKDDSSAGLLKYLTHMSEVPGVNPYEHEEINNDQLNPDSENFNAKFWVKNLRKLFESDPEYYKPSKLGIGYRNLRAYGVANDSDYQPTVTNALWKLATEGFRHFQKDDDSRYFDILKSMDAIMRPGELTVVLGRPGAGCSTLLKTIAVNTYGFHIGKESQITYDGLSPHDIERHYRGDVIYSAETDVHFPHLSVGDTLEFAARLRTPQNRGEGIDRETYAKHMASVYMATYGLSHTRNTNVGNDFVRGVSGGERKRVSIAEASLSGANIQCWDNATRGLDSATALEFIRALKTSAVILDTTPLIAIYQCSQDAYDLFDKVVVLYEGYQIFFGKATKAKEYFEKMGWKCPQRQTTADFLTSLTNPAEREPLPGYEDKVPRTAQEFETYWKNSPEYAELTKEIDEYFVECERSNTRETYRESHVAKQSNNTRPASPYTVSFFMQVRYGVARNFLRMKGDPSIPIFSVFGQLVMGLILSSVFYNLSQTTGSFYYRGAAMFFAVLFNAFSSLLEIMSLFEARPIVEKHKKYALYRPSADALASIISELPVKLAMSMSFNFVFYFMVNFRRNPGRFFFYWLMCIWCTFVMSHLFRSIGAVSTSISGAMTPATVLLLAMVIYTGFVIPTPSMLGWSRWINYINPVGYVFESLMVNEFHGREFQCAQYVPSGPGYENISRSNQVCTAVGSVPGNEMVSGTNYLAGAYQYYNSHKWRNLGITIGFAVFFLAIYIALTEFNKGAMQKGEIVLFLKGSLKKHKRKTAASNKGDIEAGPVAGKLDYQDEAEAVNNEKFTEKGSTGSVDFPENREIFFWRDLTYQVKIKKEDRVILDHVDGWVKPGQITALMGASGAGKTTLLNCLSERVTTGIITDGERLVNGHALDSSFQRSIGYVQQQDVHLPTSTVREALQFSAYLRQSNKISKKEKDDYVDYVIDLLEMTDYADALVGVAGEGLNVEQRKRLTIGVELVAKPKLLLFLDEPTSGLDSQTAWSICKLMRKLADHGQAILCTIHQPSALIMAEFDRLLFLQKGGRTAYFGELGENCQTMINYFEKYGADPCPKEANPAEWMLQVVGAAPGSHAKQDYFEVWRNSSEYQAVREEINRMEAELSKLPRDNDPEALLKYAAPLWKQYLLVSWRTIVQDWRSPGYIYSKIFLVVSAALFNGFSFFKAKNNMQGLQNQMFSVFMFFIPFNTLVQQMLPYFVKQRDVYEVREAPSRTFSWFAFIAGQITSEIPYQVAVGTIAFFCWYYPLGLYNNATPTDSVNPRGVLMWMLVTAFYVYTATMGQLCMSFSELADNAANLATLLFTMCLNFCGVLAGPDVLPGFWIFMYRCNPFTYLVQAMLSTGLANTFVKCAEREYVSVKPPNGESCSTYLDPYIKFAGGYFETRNDGSCAFCQMSSTNTFLKSVNSLYSERWRNFGIFIAFIAINIILTVIFYWLARVPKGNREKKNKK.

The segment at 1 to 30 (MSDSKMSSQDESKLEKAISQDSSSENHSIN) is disordered. Residues 1–513 (MSDSKMSSQD…NFLRMKGDPS (513 aa)) lie on the Cytoplasmic side of the membrane. Basic and acidic residues predominate over residues 8–18 (SQDESKLEKAI). The 255-residue stretch at 150-404 (LATEGFRHFQ…FEKMGWKCPQ (255 aa)) folds into the ABC transporter 1 domain. The chain crosses the membrane as a helical span at residues 514-534 (IPIFSVFGQLVMGLILSSVFY). An N-linked (GlcNAc...) asparagine glycan is attached at Asn535. Transmembrane regions (helical) follow at residues 549-569 (AMFF…MSLF), 598-618 (LPVK…MVNF), 623-643 (GRFF…SHLF), and 655-675 (GAMT…GFVI). Residue Asn724 is glycosylated (N-linked (GlcNAc...) asparagine). The chain crosses the membrane as a helical span at residues 765 to 785 (LGITIGFAVFFLAIYIALTEF). The Cytoplasmic portion of the chain corresponds to 786-1195 (NKGAMQKGEI…TIVQDWRSPG (410 aa)). Positions 859–1103 (FFWRDLTYQV…MINYFEKYGA (245 aa)) constitute an ABC transporter 2 domain. Residue 895-902 (GASGAGKT) participates in ATP binding. A run of 6 helical transmembrane segments spans residues 1196 to 1216 (YIYS…FSFF), 1230 to 1250 (FSVF…LPYF), 1281 to 1301 (IPYQ…PLGL), 1315 to 1335 (GVLM…MGQL), 1356 to 1376 (MCLN…FWIF), and 1467 to 1487 (FGIF…FYWL).

Belongs to the ABC transporter superfamily. ABCG family. PDR (TC 3.A.1.205) subfamily.

The protein resides in the membrane. In terms of biological role, transporter, whose physiological function is not yet established. Confers resistance to the chemical cycloheximide. The protein is Multidrug resistance protein CDR1 (CDR1) of Candida albicans (Yeast).